The primary structure comprises 219 residues: Protein-L-isoaspartate O-methyltransferase 2 (219 aa).

The active site involves Ser-66.

This sequence belongs to the methyltransferase superfamily. L-isoaspartyl/D-aspartyl protein methyltransferase family.

The protein localises to the cytoplasm. It catalyses the reaction [protein]-L-isoaspartate + S-adenosyl-L-methionine = [protein]-L-isoaspartate alpha-methyl ester + S-adenosyl-L-homocysteine. Its function is as follows. Catalyzes the methyl esterification of L-isoaspartyl residues in peptides and proteins that result from spontaneous decomposition of normal L-aspartyl and L-asparaginyl residues. It plays a role in the repair and/or degradation of damaged proteins. The chain is Protein-L-isoaspartate O-methyltransferase 2 from Marinobacter nauticus (strain ATCC 700491 / DSM 11845 / VT8) (Marinobacter aquaeolei).